Reading from the N-terminus, the 603-residue chain is ABC transporter E family member 1 (603 aa).

2 4Fe-4S ferredoxin-type domains span residues 7–39 (RIAI…KLCI) and 46–75 (KSAF…IINL). 2 consecutive ABC transporter domains span residues 70 to 315 (IQII…FLAG) and 344 to 566 (VKSY…LSHL). ATP contacts are provided by residues 110–117 (GTNGIGKS) and 381–388 (GENGTGKT).

This sequence belongs to the ABC transporter superfamily. ABCE family. Expressed in roots, stems, leaves, flowers and siliques.

Its subcellular location is the membrane. This chain is ABC transporter E family member 1 (ABCE1), found in Arabidopsis thaliana (Mouse-ear cress).